Reading from the N-terminus, the 202-residue chain is uncharacterized protein (202 aa).

It belongs to the dienelactone hydrolase family.

This is an uncharacterized protein from Bacillus subtilis (strain 168).